Consider the following 360-residue polypeptide: N6-Methyl-AMP deaminase (360 aa).

Residues His23 and His25 each contribute to the Zn(2+) site. N(6)-methyl-AMP-binding positions include His25, Asn27, His73, Ser105–Arg108, Asp147, and Gly180. His207 is a Zn(2+) binding site. N(6)-methyl-AMP contacts are provided by Glu210, Asp292, and Asp293. The Proton donor role is filled by Glu210. Asp292 is a binding site for Zn(2+).

This sequence belongs to the metallo-dependent hydrolases superfamily. Adenosine and AMP deaminases family. Monomer. It depends on Zn(2+) as a cofactor.

The catalysed reaction is N(6)-methyl-AMP + H2O + H(+) = IMP + methylamine. Catalyzes the hydrolysis of the free cytosolic methylated adenosine nucleotide N(6)-methyl-AMP (N6-mAMP) to produce inositol monophosphate (IMP) and methylamine. Is required for the catabolism of cytosolic N6-mAMP, which is derived from the degradation of mRNA containing N6-methylated adenine (m6A). The polypeptide is N6-Methyl-AMP deaminase (Mapda) (Mus musculus (Mouse)).